We begin with the raw amino-acid sequence, 488 residues long: ATP synthase subunit beta (488 aa).

164 to 171 (GGAGMGKT) contributes to the ATP binding site.

It belongs to the ATPase alpha/beta chains family. In terms of assembly, F-type ATPases have 2 components, CF(1) - the catalytic core - and CF(0) - the membrane proton channel. CF(1) has five subunits: alpha(3), beta(3), gamma(1), delta(1), epsilon(1). CF(0) has four main subunits: a(1), b(1), b'(1) and c(9-12).

Its subcellular location is the cellular thylakoid membrane. The catalysed reaction is ATP + H2O + 4 H(+)(in) = ADP + phosphate + 5 H(+)(out). Functionally, produces ATP from ADP in the presence of a proton gradient across the membrane. The catalytic sites are hosted primarily by the beta subunits. This Synechococcus sp. (strain RCC307) protein is ATP synthase subunit beta.